The sequence spans 190 residues: ATP synthase subunit b, chloroplastic (190 aa).

The helical transmembrane segment at 35-55 (LSVVLGVLIFFGKGVCASCLL) threads the bilayer.

This sequence belongs to the ATPase B chain family. F-type ATPases have 2 components, F(1) - the catalytic core - and F(0) - the membrane proton channel. F(1) has five subunits: alpha(3), beta(3), gamma(1), delta(1), epsilon(1). F(0) has four main subunits: a(1), b(1), b'(1) and c(10-14). The alpha and beta chains form an alternating ring which encloses part of the gamma chain. F(1) is attached to F(0) by a central stalk formed by the gamma and epsilon chains, while a peripheral stalk is formed by the delta, b and b' chains.

The protein localises to the plastid. Its subcellular location is the chloroplast thylakoid membrane. Functionally, f(1)F(0) ATP synthase produces ATP from ADP in the presence of a proton or sodium gradient. F-type ATPases consist of two structural domains, F(1) containing the extramembraneous catalytic core and F(0) containing the membrane proton channel, linked together by a central stalk and a peripheral stalk. During catalysis, ATP synthesis in the catalytic domain of F(1) is coupled via a rotary mechanism of the central stalk subunits to proton translocation. In terms of biological role, component of the F(0) channel, it forms part of the peripheral stalk, linking F(1) to F(0). In Coffea arabica (Arabian coffee), this protein is ATP synthase subunit b, chloroplastic.